Here is a 382-residue protein sequence, read N- to C-terminus: Glutamyl-tRNA reductase (382 aa).

Residues 38–41, S85, 90–92, and Q96 each bind substrate; these read TCNR and ENQ. The active-site Nucleophile is C39. Residue 164–169 participates in NADP(+) binding; sequence GAGEMG.

This sequence belongs to the glutamyl-tRNA reductase family. Homodimer.

It carries out the reaction (S)-4-amino-5-oxopentanoate + tRNA(Glu) + NADP(+) = L-glutamyl-tRNA(Glu) + NADPH + H(+). Its pathway is porphyrin-containing compound metabolism; protoporphyrin-IX biosynthesis; 5-aminolevulinate from L-glutamyl-tRNA(Glu): step 1/2. Functionally, catalyzes the NADPH-dependent reduction of glutamyl-tRNA(Glu) to glutamate 1-semialdehyde (GSA). The polypeptide is Glutamyl-tRNA reductase (Methanococcus maripaludis (strain C5 / ATCC BAA-1333)).